The sequence spans 369 residues: Glutamate 5-kinase (369 aa).

Residue Lys-8 participates in ATP binding. Ser-49, Asp-136, and Asn-148 together coordinate substrate. ATP is bound by residues 168–169 and 211–217; these read TD and TGGMATK. The 79-residue stretch at 276–354 folds into the PUA domain; that stretch reads TGKLYLDSGA…DEISQILGYG (79 aa).

It belongs to the glutamate 5-kinase family.

Its subcellular location is the cytoplasm. It catalyses the reaction L-glutamate + ATP = L-glutamyl 5-phosphate + ADP. It functions in the pathway amino-acid biosynthesis; L-proline biosynthesis; L-glutamate 5-semialdehyde from L-glutamate: step 1/2. Functionally, catalyzes the transfer of a phosphate group to glutamate to form L-glutamate 5-phosphate. In Rippkaea orientalis (strain PCC 8801 / RF-1) (Cyanothece sp. (strain PCC 8801)), this protein is Glutamate 5-kinase.